Here is a 389-residue protein sequence, read N- to C-terminus: Succinate--CoA ligase [ADP-forming] subunit beta (389 aa).

Residues 9–236 enclose the ATP-grasp domain; that stretch reads KELFAKHEVP…KDATDPLELK (228 aa). Residues K45, 52–54, S94, and E99 contribute to the ATP site; that span reads GRG. Residues N191 and D205 each contribute to the Mg(2+) site. Residues N256 and 318–320 contribute to the substrate site; that span reads GIT.

It belongs to the succinate/malate CoA ligase beta subunit family. In terms of assembly, heterotetramer of two alpha and two beta subunits. Mg(2+) is required as a cofactor.

The enzyme catalyses succinate + ATP + CoA = succinyl-CoA + ADP + phosphate. It catalyses the reaction GTP + succinate + CoA = succinyl-CoA + GDP + phosphate. It participates in carbohydrate metabolism; tricarboxylic acid cycle; succinate from succinyl-CoA (ligase route): step 1/1. Succinyl-CoA synthetase functions in the citric acid cycle (TCA), coupling the hydrolysis of succinyl-CoA to the synthesis of either ATP or GTP and thus represents the only step of substrate-level phosphorylation in the TCA. The beta subunit provides nucleotide specificity of the enzyme and binds the substrate succinate, while the binding sites for coenzyme A and phosphate are found in the alpha subunit. The protein is Succinate--CoA ligase [ADP-forming] subunit beta of Rhodococcus opacus (strain B4).